The chain runs to 204 residues: IMPACT family member YigZ (204 aa).

Belongs to the IMPACT family. In terms of assembly, monomer.

The sequence is that of IMPACT family member YigZ (yigZ) from Escherichia coli (strain K12).